Reading from the N-terminus, the 1167-residue chain is DNA-directed RNA polymerase subunit beta (1167 aa).

This sequence belongs to the RNA polymerase beta chain family. In terms of assembly, the RNAP catalytic core consists of 2 alpha, 1 beta, 1 beta' and 1 omega subunit. When a sigma factor is associated with the core the holoenzyme is formed, which can initiate transcription.

It catalyses the reaction RNA(n) + a ribonucleoside 5'-triphosphate = RNA(n+1) + diphosphate. DNA-dependent RNA polymerase catalyzes the transcription of DNA into RNA using the four ribonucleoside triphosphates as substrates. In Mycolicibacterium vanbaalenii (strain DSM 7251 / JCM 13017 / BCRC 16820 / KCTC 9966 / NRRL B-24157 / PYR-1) (Mycobacterium vanbaalenii), this protein is DNA-directed RNA polymerase subunit beta.